We begin with the raw amino-acid sequence, 105 residues long: Large ribosomal subunit protein bL21 (105 aa).

It belongs to the bacterial ribosomal protein bL21 family. In terms of assembly, part of the 50S ribosomal subunit. Contacts protein L20.

Its function is as follows. This protein binds to 23S rRNA in the presence of protein L20. This chain is Large ribosomal subunit protein bL21, found in Dictyoglomus thermophilum (strain ATCC 35947 / DSM 3960 / H-6-12).